Here is a 547-residue protein sequence, read N- to C-terminus: Chaperonin GroEL (547 aa).

ATP contacts are provided by residues 30–33 (TLGP), lysine 51, 87–91 (DGTTT), glycine 415, 479–481 (NAA), and aspartate 495.

Belongs to the chaperonin (HSP60) family. In terms of assembly, forms a cylinder of 14 subunits composed of two heptameric rings stacked back-to-back. Interacts with the co-chaperonin GroES.

It is found in the cytoplasm. The enzyme catalyses ATP + H2O + a folded polypeptide = ADP + phosphate + an unfolded polypeptide.. Its function is as follows. Together with its co-chaperonin GroES, plays an essential role in assisting protein folding. The GroEL-GroES system forms a nano-cage that allows encapsulation of the non-native substrate proteins and provides a physical environment optimized to promote and accelerate protein folding. The protein is Chaperonin GroEL of Delftia acidovorans (strain DSM 14801 / SPH-1).